The following is a 182-amino-acid chain: CDP-diacylglycerol--glycerol-3-phosphate 3-phosphatidyltransferase (182 aa).

Residues 1-12 (MRLNIPTCLTLF) are Cytoplasmic-facing. The chain crosses the membrane as a helical span at residues 13–37 (RLIIVPFFIIVFYLPFSNASFYSAI). Over 38–60 (IFILAALTDWFDGFLARKLNQTT) the chain is Periplasmic. The helical transmembrane segment at 61–81 (CFGAFLDPVADKIIVVIGLIL) threads the bilayer. Over 82-86 (IIEYF) the chain is Cytoplasmic. A helical membrane pass occupies residues 87 to 107 (HSFWITIPSLIMIIREIIISS). Topologically, residues 108 to 145 (LREWMAEIGKNNLLSVSLISKLKTSIQMLAIFSLLWKE) are periplasmic. A helical transmembrane segment spans residues 146 to 168 (TYIIIIIGILSLYVSSILAFLSM). The Cytoplasmic portion of the chain corresponds to 169–181 (LKYFYIAWRDLFR).

It belongs to the CDP-alcohol phosphatidyltransferase class-I family.

It is found in the cell inner membrane. It carries out the reaction a CDP-1,2-diacyl-sn-glycerol + sn-glycerol 3-phosphate = a 1,2-diacyl-sn-glycero-3-phospho-(1'-sn-glycero-3'-phosphate) + CMP + H(+). Its pathway is phospholipid metabolism; phosphatidylglycerol biosynthesis; phosphatidylglycerol from CDP-diacylglycerol: step 1/2. Functionally, catalyzes the conversion of cytidine diphosphate diacylglycerol (CDP-DG) and glycerol 3-phosphate into phosphatidylglycerol. Essential for the synthesis of anionic phospholipids, thereby playing a role in balancing the ratio of zwitterionic and anionic phospholipids, which is thought to be important for normal membrane function. This is CDP-diacylglycerol--glycerol-3-phosphate 3-phosphatidyltransferase from Wigglesworthia glossinidia brevipalpis.